A 1381-amino-acid polypeptide reads, in one-letter code: Hepatocyte growth factor receptor (1381 aa).

The first 24 residues, Met-1 to Gly-24, serve as a signal peptide directing secretion. Residues Glu-25–Thr-932 are Extracellular-facing. In terms of domain architecture, Sema spans Lys-27–Leu-515. A glycan (N-linked (GlcNAc...) asparagine) is linked at Asn-45. 4 disulfide bridges follow: Cys-95–Cys-101, Cys-98–Cys-160, Cys-133–Cys-141, and Cys-172–Cys-175. Residue Asn-106 is glycosylated (N-linked (GlcNAc...) asparagine). N-linked (GlcNAc...) asparagine glycosylation occurs at Asn-149. An N-linked (GlcNAc...) asparagine glycan is attached at Asn-202. Intrachain disulfides connect Cys-298-Cys-363 and Cys-385-Cys-397. Asn-399 is a glycosylation site (N-linked (GlcNAc...) asparagine). Intrachain disulfides connect Cys-520-Cys-538, Cys-526-Cys-561, Cys-529-Cys-545, and Cys-541-Cys-551. IPT/TIG domains are found at residues Pro-563 to Val-655, Pro-657 to Arg-739, and Pro-742 to Val-836. O-linked (Man) threonine glycosylation is present at Thr-582. Asn-607 and Asn-635 each carry an N-linked (GlcNAc...) asparagine glycan. 2 O-linked (Man) threonine glycosylation sites follow: Thr-676 and Thr-761. Residues Asn-785, Asn-879, and Asn-930 are each glycosylated (N-linked (GlcNAc...) asparagine). Residues Gly-933–Leu-955 form a helical membrane-spanning segment. At Lys-956–Thr-1381 the chain is on the cytoplasmic side. Ser-966 bears the Phosphoserine mark. Position 977 is a phosphothreonine (Thr-977). Phosphoserine occurs at positions 990, 997, and 1000. A Phosphotyrosine modification is found at Tyr-1003. The 268-residue stretch at Val-1078 to Ile-1345 folds into the Protein kinase domain. ATP contacts are provided by residues Ile-1084–Val-1092 and Lys-1110. Residue Asp-1204 is the Proton acceptor of the active site. Positions Leu-1212–Thr-1381 are interaction with RANBP9. Position 1230 is a phosphotyrosine (Tyr-1230). Phosphotyrosine; by autocatalysis is present on residues Tyr-1234 and Tyr-1235. Thr-1289 carries the post-translational modification Phosphothreonine. Positions Trp-1320–Val-1359 are interaction with MUC20. Tyr-1349 and Tyr-1356 each carry phosphotyrosine; by autocatalysis. Residue Tyr-1365 is modified to Phosphotyrosine.

Belongs to the protein kinase superfamily. Tyr protein kinase family. As to quaternary structure, heterodimer made of an alpha chain (50 kDa) and a beta chain (145 kDa) which are disulfide linked. Binds PLXNB1. Interacts when phosphorylated with downstream effectors including STAT3, PIK3R1, SRC, PCLG1, GRB2 and GAB1. Interacts with SPSB1, SPSB2 and SPSB4. Interacts with INPP5D/SHIP1. When phosphorylated at Tyr-1356, interacts with INPPL1/SHIP2. Interacts with RANBP9 and RANBP10, as well as SPSB1, SPSB2, SPSB3 and SPSB4. SPSB1 binding occurs in the presence and in the absence of HGF, however HGF treatment has a positive effect on this interaction. Interacts with MUC20; prevents interaction with GRB2 and suppresses hepatocyte growth factor-induced cell proliferation. Interacts with GRB10. Interacts with PTPN1 and PTPN2. Interacts with HSP90AA1 and HSP90AB1; the interaction suppresses MET kinase activity. Interacts with tensin TNS3. Interacts (when phosphorylated) with tensin TNS4 (via SH2 domain); the interaction increases MET protein stability by inhibiting MET endocytosis and subsequent lysosomal degradation. In terms of processing, autophosphorylated in response to ligand binding on Tyr-1234 and Tyr-1235 in the kinase domain leading to further phosphorylation of Tyr-1349 and Tyr-1356 in the C-terminal multifunctional docking site. Dephosphorylated by PTPRJ at Tyr-1349 and Tyr-1365. Dephosphorylated by PTPN1 and PTPN2. Post-translationally, ubiquitinated. Ubiquitination by CBL regulates the receptor stability and activity through proteasomal degradation. O-mannosylation of IPT/TIG domains by TMEM260 is required for protein maturation. O-mannosylated residues are composed of single mannose glycans that are not elongated or modified.

It is found in the membrane. The catalysed reaction is L-tyrosyl-[protein] + ATP = O-phospho-L-tyrosyl-[protein] + ADP + H(+). Its activity is regulated as follows. In its inactive state, the C-terminal tail interacts with the catalytic domain and inhibits the kinase activity. Upon ligand binding, the C-terminal tail is displaced and becomes phosphorylated, thus increasing the kinase activity. Its function is as follows. Receptor tyrosine kinase that transduces signals from the extracellular matrix into the cytoplasm by binding to hepatocyte growth factor/HGF ligand. Regulates many physiological processes including proliferation, scattering, morphogenesis and survival. Ligand binding at the cell surface induces autophosphorylation of MET on its intracellular domain that provides docking sites for downstream signaling molecules. Following activation by ligand, interacts with the PI3-kinase subunit PIK3R1, PLCG1, SRC, GRB2, STAT3 or the adapter GAB1. Recruitment of these downstream effectors by MET leads to the activation of several signaling cascades including the RAS-ERK, PI3 kinase-AKT, or PLCgamma-PKC. The RAS-ERK activation is associated with the morphogenetic effects while PI3K/AKT coordinates prosurvival effects. During embryonic development, MET signaling plays a role in gastrulation, development and migration of muscles and neuronal precursors, angiogenesis and kidney formation. In adults, participates in wound healing as well as organ regeneration and tissue remodeling. Also promotes differentiation and proliferation of hematopoietic cells. In Saimiri boliviensis boliviensis (Bolivian squirrel monkey), this protein is Hepatocyte growth factor receptor (MET).